The following is a 275-amino-acid chain: Erythroagglutinating phytohemagglutinin (275 aa).

Residues 1–21 (MASSNLLSLALFLVLLTHANS) form the signal peptide. N-linked (GlcNAc...) (high mannose) asparagine glycosylation occurs at Asn33. 2 N-linked (GlcNAc...) asparagine glycosylation sites follow: Asn81 and Asn101.

The protein belongs to the leguminous lectin family.

This insecticidal carbohydrate-binding lectin is toxic for the cowpea weevil. The sequence is that of Erythroagglutinating phytohemagglutinin (DLEC1) from Phaseolus vulgaris (Kidney bean).